We begin with the raw amino-acid sequence, 63 residues long: Large ribosomal subunit protein uL30 (63 aa).

The protein belongs to the universal ribosomal protein uL30 family. In terms of assembly, part of the 50S ribosomal subunit.

In Xylella fastidiosa (strain 9a5c), this protein is Large ribosomal subunit protein uL30.